The following is a 459-amino-acid chain: Replication initiator protein (459 aa).

Essential for pSAM2 replication. The sequence is that of Replication initiator protein (repSA) from Streptomyces ambofaciens.